A 231-amino-acid chain; its full sequence is Somatolactin-1 (231 aa).

An N-terminal signal peptide occupies residues 1 to 24 (MRMIRAIKQGQWAVLLWPYLLTAS). Intrachain disulfides connect Cys-29/Cys-39, Cys-89/Cys-205, and Cys-222/Cys-230. The N-linked (GlcNAc...) asparagine glycan is linked to Asn-145.

The protein belongs to the somatotropin/prolactin family. Pituitary gland.

Its subcellular location is the secreted. This Sparus aurata (Gilthead sea bream) protein is Somatolactin-1.